The chain runs to 154 residues: IQ domain-containing protein F3 (154 aa).

The IQ domain occupies 89 to 118 (QEQATVKLQSCIRMWQCRQCYRQMCNALCL).

This chain is IQ domain-containing protein F3 (IQCF3), found in Homo sapiens (Human).